The primary structure comprises 248 residues: Probable transcriptional regulatory protein PsycPRwf_1013 (248 aa).

This sequence belongs to the TACO1 family.

It is found in the cytoplasm. This is Probable transcriptional regulatory protein PsycPRwf_1013 from Psychrobacter sp. (strain PRwf-1).